The primary structure comprises 694 residues: Proprotein convertase subtilisin/kexin type 9 (694 aa).

The signal sequence occupies residues 1 to 34 (MGTHCSAWLRWPLLPLLPPLLLLLLLLCPTGAGA). The propeptide occupies 35 to 155 (QDEDGDYEEL…IEEDSFVFAQ (121 aa)). Tyrosine 41 bears the Sulfotyrosine mark. Serine 50 is modified (phosphoserine). In terms of domain architecture, Peptidase S8 spans 158–470 (PWNLERIIPA…RTVWSAHSGP (313 aa)). Active-site charge relay system residues include aspartate 189 and histidine 229. Cystine bridges form between cysteine 226–cysteine 258 and cysteine 326–cysteine 361. The active-site Charge relay system is the serine 389. Residues 453–694 (ETGGQLLCRT…RPSAKASWVQ (242 aa)) are C-terminal domain. 3 cysteine pairs are disulfide-bonded: cysteine 460/cysteine 530, cysteine 480/cysteine 529, and cysteine 489/cysteine 512. The Cell attachment site signature appears at 499-501 (RGD). A glycan (N-linked (GlcNAc...) asparagine) is linked at asparagine 536. Cystine bridges form between cysteine 537–cysteine 604, cysteine 555–cysteine 603, cysteine 565–cysteine 591, cysteine 611–cysteine 682, cysteine 629–cysteine 681, and cysteine 638–cysteine 657. Serine 691 is subject to Phosphoserine.

Belongs to the peptidase S8 family. As to quaternary structure, monomer. Can self-associate to form dimers and higher multimers which may have increased LDLR degrading activity. The precursor protein but not the mature protein may form multimers. Interacts with APOB, VLDLR, LRP8/APOER2 and BACE1. The full-length immature form (pro-PCSK9) interacts with SCNN1A, SCNN1B and SCNN1G. The pro-PCSK9 form (via C-terminal domain) interacts with LDLR. Interacts (via the C-terminal domain) with ANXA2 (via repeat Annexin 1); the interaction inhibits the degradation of LDLR. The cofactor is Ca(2+). Post-translationally, cleavage by furin and PCSK5 generates a truncated inactive protein that is unable to induce LDLR degradation. In terms of processing, undergoes autocatalytic cleavage in the endoplasmic reticulum to release the propeptide from the N-terminus and the cleavage of the propeptide is strictly required for its maturation and activation. The cleaved propeptide however remains associated with the catalytic domain through non-covalent interactions, preventing potential substrates from accessing its active site. As a result, it is secreted from cells as a propeptide-containing, enzymatically inactive protein. Phosphorylation protects the propeptide against proteolysis. Hepatocytes, kidney mesenchymal cells, intestinal ileum, colon epithelia and embryonic brain telencephalon neurons.

The protein localises to the cytoplasm. The protein resides in the secreted. It is found in the endosome. Its subcellular location is the lysosome. It localises to the cell surface. The protein localises to the endoplasmic reticulum. The protein resides in the golgi apparatus. Its activity is regulated as follows. Its proteolytic activity is autoinhibited by the non-covalent binding of the propeptide to the catalytic domain. Inhibited by EGTA. Functionally, crucial player in the regulation of plasma cholesterol homeostasis. Binds to low-density lipid receptor family members: low density lipoprotein receptor (LDLR), very low density lipoprotein receptor (VLDLR), apolipoprotein E receptor (LRP1/APOER) and apolipoprotein receptor 2 (LRP8/APOER2), and promotes their degradation in intracellular acidic compartments. Acts via a non-proteolytic mechanism to enhance the degradation of the hepatic LDLR through a clathrin LDLRAP1/ARH-mediated pathway. May prevent the recycling of LDLR from endosomes to the cell surface or direct it to lysosomes for degradation. Can induce ubiquitination of LDLR leading to its subsequent degradation. Inhibits intracellular degradation of APOB via the autophagosome/lysosome pathway in a LDLR-independent manner. Involved in the disposal of non-acetylated intermediates of BACE1 in the early secretory pathway. Inhibits epithelial Na(+) channel (ENaC)-mediated Na(+) absorption by reducing ENaC surface expression primarily by increasing its proteasomal degradation. Regulates neuronal apoptosis via modulation of LRP8/APOER2 levels and related anti-apoptotic signaling pathways. This is Proprotein convertase subtilisin/kexin type 9 (Pcsk9) from Mus musculus (Mouse).